The chain runs to 168 residues: G/U mismatch-specific DNA glycosylase (168 aa).

It belongs to the uracil-DNA glycosylase (UDG) superfamily. TDG/mug family. Binds DNA as a monomer.

It is found in the cytoplasm. The enzyme catalyses Specifically hydrolyzes mismatched double-stranded DNA and polynucleotides, releasing free uracil.. Excises ethenocytosine and uracil, which can arise by alkylation or deamination of cytosine, respectively, from the corresponding mispairs with guanine in ds-DNA. It is capable of hydrolyzing the carbon-nitrogen bond between the sugar-phosphate backbone of the DNA and the mispaired base. The complementary strand guanine functions in substrate recognition. Required for DNA damage lesion repair in stationary-phase cells. The polypeptide is G/U mismatch-specific DNA glycosylase (Escherichia fergusonii (strain ATCC 35469 / DSM 13698 / CCUG 18766 / IAM 14443 / JCM 21226 / LMG 7866 / NBRC 102419 / NCTC 12128 / CDC 0568-73)).